Consider the following 134-residue polypeptide: Protein YhfA (134 aa).

In Escherichia coli O157:H7, this protein is Protein YhfA (yhfA).